The chain runs to 1394 residues: MEEIPIKVAVRIRPLLCKEVLHNHQVCVRDIPKTQQIIIGRDRVFTFDFVFGKNSTQDEVYSTCIKPLVLSLIEGYNATVFAYGQTGSGKTYTIGGGHVASVVDGQKGIIPRAIQEIFQSISGNPNIDFKIKVSYIEVYKEDLRDLLELETSMKDLHIREDEKGNTVIVGAKECQVDSVEDVMGLLQVGNAARHTGTTQMNEHSSRSHAIFTISVCQVGKSAEATEDGEWCSHRHIVSKFHFVDLAGSERVTKTGNTGERFKESIQINSGLLALGNVISALGDPRRKSSHVPYRDAKITRLLKDSLGGSAKTVMITCVSPSSSDFDESLNSLKYANRARNIRNKPTLNFSPQADRMDEMEFEIKLLREALQSHQASISQTSQTASENVPDQNRIHSLEEQIAQLQEECLGYQDCIEQAFAFLVDLKDAVRLNQKQQHKLQQWFSRTQEVRKAVLTPLPGNQSIGNLEEGPQHVTVLQLKRELKKYQCALAADQVVFTQKELELEELRRQMQLMAQESKGHAVSLKEAQKVNRLQNEKIIEQQLLVDQLSEELAKRSSSMPTSTKESCGDGPDARAPEKRPHTAPFDSHWGHYVYIPSRQDFKKVCSSSPVYSLDQVFAGFRTRSQMLMGHLEDQDEVLHCQFSDNSDDEDSEGQEKPRVRSRSHSWVKKPGSVCSLVEMSDTQAECQRSYLGNGDLKMESLQESQELNLQKLRTSELILNKAKQKMRELTINIRMKEDLIKELIKTGDNAKSVSRQYSLKVTKLEHEAEQAKVELTETRKQLQELEGKDLSDVALKVKLQKEFRKKMDAAKLRVQVLQKKQQDSKKLASLSIQNEKRASELEQNVDHLKYQKVQLQRRLREESEKKKQLDAEVKRDQQKLKELQLNAGQGEGLHPKAEDTDAFNLNRRKGPFRSVDQLQKLDEQRKWLDEEVEKVLSQRQELEMLEEELKKREAIVSKKEALLQEKSHLENKKLRSSQALSTDSLKISARLNLLDQELSEKSLLLENSPTEEKVKISEQVQALQREREQLQRQRNSVDEKLRHGRVLSPKEEHLLFQLEEGIEALEAAIEFKNESIQNRQSSLKSSFQNLSQSESNVLEKLVCLNIAEIRAILFKYFNKVINLREAERKQQLQNKEMKMKVLERDNMVHELESALEYLRLQCDRRLTLQQKEHEQKMQLLLHHFKDQDGEGIIETLNKYEDKIQQLEKDLYFYKKTSRDLKKRLKDPVQGAVQWQRTLTEHHDAGDGVLNPEEAAVLSEELKWASRTENTKLNGREKEVDNSSSSLKTPPLTQQILEDGPDSLPVCGSLAPSSGQLQSSADKTEAHAFTQSQSPPPPQLQPVRSIAQLQGVKPVKVCRRELRQISALELTLRRSSLGAGVRSVTADSLEEPEES.

One can recognise a Kinesin motor domain in the interval 5–341 (PIKVAVRIRP…LKYANRARNI (337 aa)). 84 to 91 (GQTGSGKT) lines the ATP pocket. 2 coiled-coil regions span residues 352-418 (QADR…IEQA) and 493-554 (QVVF…ELAK). Disordered regions lie at residues 551–583 (ELAK…PHTA) and 642–664 (FSDN…SRSH). A compositionally biased stretch (polar residues) spans 555 to 565 (RSSSMPTSTKE). The segment covering 571-580 (PDARAPEKRP) has biased composition (basic and acidic residues). Residues serine 643, serine 646, serine 672, serine 675, and serine 704 each carry the phosphoserine modification. A coiled-coil region spans residues 709 to 980 (LQKLRTSELI…NKKLRSSQAL (272 aa)). The residue at position 999 (serine 999) is a Phosphoserine. Coiled coils occupy residues 1010–1078 (TEEK…SIQN), 1118–1152 (NKVI…HELE), and 1187–1226 (QDGE…RLKD). Positions 1267-1280 (TENTKLNGREKEVD) are enriched in basic and acidic residues. A disordered region spans residues 1267–1340 (TENTKLNGRE…SQSPPPPQLQ (74 aa)). Composition is skewed to polar residues over residues 1281–1295 (NSSS…TQQI) and 1310–1320 (APSSGQLQSSA). 2 positions are modified to phosphoserine: serine 1365 and serine 1387. Residues 1375-1394 (SLGAGVRSVTADSLEEPEES) are disordered.

This sequence belongs to the TRAFAC class myosin-kinesin ATPase superfamily. Kinesin family. KIF27 subfamily. As to quaternary structure, interacts with STK36.

The protein localises to the cytoplasm. Its subcellular location is the cytoskeleton. The protein resides in the cell projection. It is found in the cilium. Plays an essential role in motile ciliogenesis. In Rattus norvegicus (Rat), this protein is Kinesin-like protein KIF27 (Kif27).